A 471-amino-acid polypeptide reads, in one-letter code: Ribulose bisphosphate carboxylase large chain (471 aa).

Residue lysine 5 is modified to N6,N6,N6-trimethyllysine. Substrate is bound by residues asparagine 114 and threonine 164. Catalysis depends on lysine 166, which acts as the Proton acceptor. Position 168 (lysine 168) interacts with substrate. Mg(2+) is bound by residues lysine 192, aspartate 194, and glutamate 195. Lysine 192 is subject to N6-carboxylysine. Residue histidine 285 is the Proton acceptor of the active site. Residues arginine 286, histidine 318, and serine 370 each contribute to the substrate site.

The protein belongs to the RuBisCO large chain family. Type I subfamily. As to quaternary structure, heterohexadecamer of 8 large chains and 8 small chains; disulfide-linked. The disulfide link is formed within the large subunit homodimers. It depends on Mg(2+) as a cofactor. The disulfide bond which can form in the large chain dimeric partners within the hexadecamer appears to be associated with oxidative stress and protein turnover.

It localises to the plastid. Its subcellular location is the chloroplast. The catalysed reaction is 2 (2R)-3-phosphoglycerate + 2 H(+) = D-ribulose 1,5-bisphosphate + CO2 + H2O. It carries out the reaction D-ribulose 1,5-bisphosphate + O2 = 2-phosphoglycolate + (2R)-3-phosphoglycerate + 2 H(+). Its function is as follows. RuBisCO catalyzes two reactions: the carboxylation of D-ribulose 1,5-bisphosphate, the primary event in carbon dioxide fixation, as well as the oxidative fragmentation of the pentose substrate in the photorespiration process. Both reactions occur simultaneously and in competition at the same active site. In Anthocleista grandiflora (Forest fever tree), this protein is Ribulose bisphosphate carboxylase large chain.